We begin with the raw amino-acid sequence, 478 residues long: Glycogen synthase (478 aa).

Lys-15 lines the ADP-alpha-D-glucose pocket.

It belongs to the glycosyltransferase 1 family. Bacterial/plant glycogen synthase subfamily.

It catalyses the reaction [(1-&gt;4)-alpha-D-glucosyl](n) + ADP-alpha-D-glucose = [(1-&gt;4)-alpha-D-glucosyl](n+1) + ADP + H(+). Its pathway is glycan biosynthesis; glycogen biosynthesis. Functionally, synthesizes alpha-1,4-glucan chains using ADP-glucose. This chain is Glycogen synthase, found in Lactococcus lactis subsp. lactis (strain IL1403) (Streptococcus lactis).